Here is a 408-residue protein sequence, read N- to C-terminus: 1-deoxy-D-xylulose 5-phosphate reductoisomerase (408 aa).

NADPH contacts are provided by Thr19, Gly20, Ser21, Ile22, Gly45, Asn47, and Asn130. Residue Lys131 participates in 1-deoxy-D-xylulose 5-phosphate binding. Residue Glu132 participates in NADPH binding. A Mn(2+)-binding site is contributed by Asp156. Positions 157, 158, 182, and 205 each coordinate 1-deoxy-D-xylulose 5-phosphate. A Mn(2+)-binding site is contributed by Glu158. Gly211 provides a ligand contact to NADPH. 1-deoxy-D-xylulose 5-phosphate contacts are provided by Ser218, Asn223, Lys224, and Glu227. Residue Glu227 participates in Mn(2+) binding.

It belongs to the DXR family. It depends on Mg(2+) as a cofactor. Requires Mn(2+) as cofactor.

The enzyme catalyses 2-C-methyl-D-erythritol 4-phosphate + NADP(+) = 1-deoxy-D-xylulose 5-phosphate + NADPH + H(+). The protein operates within isoprenoid biosynthesis; isopentenyl diphosphate biosynthesis via DXP pathway; isopentenyl diphosphate from 1-deoxy-D-xylulose 5-phosphate: step 1/6. Its function is as follows. Catalyzes the NADPH-dependent rearrangement and reduction of 1-deoxy-D-xylulose-5-phosphate (DXP) to 2-C-methyl-D-erythritol 4-phosphate (MEP). The protein is 1-deoxy-D-xylulose 5-phosphate reductoisomerase of Gluconobacter oxydans (strain 621H) (Gluconobacter suboxydans).